Consider the following 356-residue polypeptide: Probable butyrate kinase (356 aa).

It belongs to the acetokinase family.

It localises to the cytoplasm. The enzyme catalyses butanoate + ATP = butanoyl phosphate + ADP. In Clostridium perfringens (strain SM101 / Type A), this protein is Probable butyrate kinase.